Here is a 110-residue protein sequence, read N- to C-terminus: DNA-directed RNA polymerase subunit omega (110 aa).

This sequence belongs to the RNA polymerase subunit omega family. As to quaternary structure, the RNAP catalytic core consists of 2 alpha, 1 beta, 1 beta' and 1 omega subunit. When a sigma factor is associated with the core the holoenzyme is formed, which can initiate transcription.

The catalysed reaction is RNA(n) + a ribonucleoside 5'-triphosphate = RNA(n+1) + diphosphate. Promotes RNA polymerase assembly. Latches the N- and C-terminal regions of the beta' subunit thereby facilitating its interaction with the beta and alpha subunits. This chain is DNA-directed RNA polymerase subunit omega, found in Vesicomyosocius okutanii subsp. Calyptogena okutanii (strain HA).